The sequence spans 106 residues: Photosystem II 5 kDa protein, chloroplastic (106 aa).

The transit peptide at 1–76 (MASITMMSSF…ACSVAKTAMA (76 aa)) directs the protein to the chloroplast. The cysteines at positions 95 and 104 are disulfide-linked.

Post-translationally, disulfide bond. Expressed in midvein, lamina and periphery of leaves (at protein level).

Its subcellular location is the plastid. It is found in the chloroplast thylakoid membrane. May be a component of the oxygen-evolving complex. The chain is Photosystem II 5 kDa protein, chloroplastic from Petunia hybrida (Petunia).